Here is a 249-residue protein sequence, read N- to C-terminus: Type III pantothenate kinase (249 aa).

An ATP-binding site is contributed by Asp6–Lys13. Substrate-binding positions include Phe77 and Gly98–Arg101. Asp100 (proton acceptor) is an active-site residue. K(+) is bound at residue Asp121. ATP is bound at residue Ser124. Residue Thr177 participates in substrate binding.

It belongs to the type III pantothenate kinase family. As to quaternary structure, homodimer. Requires NH4(+) as cofactor. K(+) is required as a cofactor.

It is found in the cytoplasm. It carries out the reaction (R)-pantothenate + ATP = (R)-4'-phosphopantothenate + ADP + H(+). The protein operates within cofactor biosynthesis; coenzyme A biosynthesis; CoA from (R)-pantothenate: step 1/5. Catalyzes the phosphorylation of pantothenate (Pan), the first step in CoA biosynthesis. The protein is Type III pantothenate kinase of Teredinibacter turnerae (strain ATCC 39867 / T7901).